Reading from the N-terminus, the 444-residue chain is uncharacterized protein (444 aa).

Transmembrane regions (helical) follow at residues 9–29 (LIVS…MIAV), 42–62 (IASI…TQPI), 82–102 (LFLI…LIVF), 104–126 (ALQA…HVVS), 136–156 (FFGL…SILI), 164–184 (IFWV…TMFP), 193–213 (APLD…IILL), 217–237 (EAPW…PLFF), 263–283 (LSVL…PLFM), 295–315 (GMAL…GAQL), 324–344 (IIFL…LLSS), 347–367 (SVLF…VGLT), 387–407 (GIFS…IGLI), and 411–431 (HTLF…SLGI).

The protein belongs to the major facilitator superfamily. TCR/Tet family.

The protein resides in the cell membrane. This is an uncharacterized protein from Bacillus subtilis (strain 168).